Consider the following 23-residue polypeptide: M-poneritoxin-Nc1a (23 aa).

Belongs to the non-disulfide-bridged peptide (NDBP) superfamily. Medium-length antimicrobial peptide (group 3) family. Ponericin-W subfamily. Expressed by the venom gland.

Its subcellular location is the secreted. The protein resides in the target cell membrane. Membrane-perturbating peptide with multiple activities. It is insecticidal, since it induces contractile paralysis in insects (L.cuprina) during several hours, and death after 24 hours. It shows antibacterial activity with higher activity against Gram-positive than Gram-negative bacteria. It is also antiparasitic, since it potently inhibits the larval development of the major pathogenic nematode of ruminants (H.contortus, IC(50)=5.1 uM), but fails to reduce the motility of adult males of the other nematode B.malayi. It also shows cytotoxic activity against HEK293 cells (EC(50)=12-14 uM) and induces hemolysis in human erythrocytes (EC(50)=28.6-48.2 uM). In addition, it causes an important increase in intracellular calcium concentration on neuronal and epithelial cell lines, which supports a non-specific membrane perturbation mechanism of action. In vivo, it induces pain by intraplantar injection into mice, suggesting a defensive function against vertebrate predators. This Neoponera commutata (Large hunting ant) protein is M-poneritoxin-Nc1a.